A 118-amino-acid chain; its full sequence is uncharacterized protein (118 aa).

This is an uncharacterized protein from Escherichia coli (strain UTI89 / UPEC).